A 317-amino-acid polypeptide reads, in one-letter code: Ribose-phosphate pyrophosphokinase (317 aa).

ATP contacts are provided by residues 43–45 (DGE) and 102–103 (RQ). Residues His-136 and Asp-175 each coordinate Mg(2+). Residue Lys-198 is part of the active site. D-ribose 5-phosphate contacts are provided by residues Arg-200, Asp-224, and 228-232 (DTAGT).

It belongs to the ribose-phosphate pyrophosphokinase family. Class I subfamily. In terms of assembly, homohexamer. It depends on Mg(2+) as a cofactor.

It localises to the cytoplasm. It catalyses the reaction D-ribose 5-phosphate + ATP = 5-phospho-alpha-D-ribose 1-diphosphate + AMP + H(+). It participates in metabolic intermediate biosynthesis; 5-phospho-alpha-D-ribose 1-diphosphate biosynthesis; 5-phospho-alpha-D-ribose 1-diphosphate from D-ribose 5-phosphate (route I): step 1/1. Its function is as follows. Involved in the biosynthesis of the central metabolite phospho-alpha-D-ribosyl-1-pyrophosphate (PRPP) via the transfer of pyrophosphoryl group from ATP to 1-hydroxyl of ribose-5-phosphate (Rib-5-P). This Bacillus anthracis protein is Ribose-phosphate pyrophosphokinase.